The chain runs to 369 residues: tRNA 2-selenouridine synthase (369 aa).

The Rhodanese domain maps to 15–138 (FLNQHPMMDV…MRQYLIGVIE (124 aa)). Residue cysteine 98 is the S-selanylcysteine intermediate of the active site.

It belongs to the SelU family. In terms of assembly, monomer.

The catalysed reaction is 5-methylaminomethyl-2-thiouridine(34) in tRNA + selenophosphate + (2E)-geranyl diphosphate + H2O + H(+) = 5-methylaminomethyl-2-selenouridine(34) in tRNA + (2E)-thiogeraniol + phosphate + diphosphate. It carries out the reaction 5-methylaminomethyl-2-thiouridine(34) in tRNA + (2E)-geranyl diphosphate = 5-methylaminomethyl-S-(2E)-geranyl-thiouridine(34) in tRNA + diphosphate. The enzyme catalyses 5-methylaminomethyl-S-(2E)-geranyl-thiouridine(34) in tRNA + selenophosphate + H(+) = 5-methylaminomethyl-2-(Se-phospho)selenouridine(34) in tRNA + (2E)-thiogeraniol. It catalyses the reaction 5-methylaminomethyl-2-(Se-phospho)selenouridine(34) in tRNA + H2O = 5-methylaminomethyl-2-selenouridine(34) in tRNA + phosphate. Functionally, involved in the post-transcriptional modification of the uridine at the wobble position (U34) of tRNA(Lys), tRNA(Glu) and tRNA(Gln). Catalyzes the conversion of 2-thiouridine (S2U-RNA) to 2-selenouridine (Se2U-RNA). Acts in a two-step process involving geranylation of 2-thiouridine (S2U) to S-geranyl-2-thiouridine (geS2U) and subsequent selenation of the latter derivative to 2-selenouridine (Se2U) in the tRNA chain. In Shewanella sp. (strain W3-18-1), this protein is tRNA 2-selenouridine synthase.